The chain runs to 473 residues: Dynein axonemal assembly factor 11 (473 aa).

LRR repeat units lie at residues 22-43 (SLEE…DKWC), 45-66 (DLKI…SKLK), 67-88 (KLEY…EGCE), and 89-110 (WLTK…KTLT). The 39-residue stretch at 123–161 (NPCADFDGYRQFVVVTLQQLKWLDGKEIERSERIQALQN) folds into the LRRCT domain. Positions 153–205 (SERIQALQNYTSVEQQIREQEKAYCLRRAKEKEEAQRKLEEENESEDKKKSST) form a coiled coil. Composition is skewed to basic and acidic residues over residues 188–202 (QRKL…DKKK) and 273–283 (EKQRKAQDKLS). 3 disordered regions span residues 188–244 (QRKL…TKES), 273–292 (EKQR…AKPP), and 387–473 (VGEM…PPLI). A CS domain is found at 305–402 (VNEAKLDFSL…GGQRTPTSVK (98 aa)). Low complexity predominate over residues 397–408 (TPTSVKTTSTSS). A compositionally biased stretch (basic and acidic residues) spans 417–431 (KQIERLEVDPSKHSC). Positions 456 to 467 (PSEEDPDFEDNP) are enriched in acidic residues.

The protein belongs to the tilB family. In terms of assembly, interacts (via CS domain) with ZMYND10 (via C-terminus). Mainly expressed in cells with motile cilia. Expressed in epithelial cells of the trachea, testis and ependymal cells of the cerebral ventricles. In testis, abundant expression in late prophase of meiosis I with a dramatic decrease after the first meiotic division (at protein level).

Its subcellular location is the cytoplasm. It is found in the cell projection. The protein localises to the cilium. The protein resides in the dynein axonemal particle. It localises to the flagellum. Its function is as follows. Involved in dynein arm assembly, is important for expression and transporting outer dynein arm (ODA) proteins from the cytoplasm to the cilia. Acts as a crucial component in the formation and motility of spermatozoal flagella. The chain is Dynein axonemal assembly factor 11 (Dnaaf11) from Mus musculus (Mouse).